The primary structure comprises 317 residues: Melanocyte-stimulating hormone receptor (317 aa).

Residues 1 to 37 (MPLQGPQRRLLGSLNSTLPATPYLGLTTNQTEPPCLE) are Extracellular-facing. N-linked (GlcNAc...) asparagine glycosylation is present at asparagine 29. Residues 38-63 (VSIPDGLFLSLGLVSLVENVLVVTAI) traverse the membrane as a helical segment. Residues 64 to 72 (AKNRNLHSP) are Cytoplasmic-facing. A helical membrane pass occupies residues 73-93 (MYYFICCLAVSDLLVSMSNVL). The Extracellular portion of the chain corresponds to 94-118 (EMAILLLLEAGVLATQASVLQQLDN). A helical transmembrane segment spans residues 119–140 (IIDVLICGSMVSSLCFLGSIAV). The Cytoplasmic segment spans residues 141–163 (DRYISIFYALRYHSIMMLPRVWR). A helical membrane pass occupies residues 164–183 (AIVAIWVVSVLSSTLFIAYY). Over 184–191 (NHTAVLLC) the chain is Extracellular. A helical transmembrane segment spans residues 192-211 (LVTFFVAMLVLMAVLYVHML). At 212 to 240 (ARACQHARGIARLHKRQHPIHQGFGLKGA) the chain is on the cytoplasmic side. The chain crosses the membrane as a helical span at residues 241–266 (ATLTILLGVFFLCWGPFFLHLSLLIL). Topologically, residues 267 to 279 (CPQHPTCGCVFKN) are extracellular. The chain crosses the membrane as a helical span at residues 280 to 300 (FKLFLTLILCSAIVDPLIYAF). The Cytoplasmic portion of the chain corresponds to 301–317 (RSQELRKTLQEVLLCSW). Cysteine 315 carries the S-palmitoyl cysteine lipid modification.

It belongs to the G-protein coupled receptor 1 family. In terms of assembly, interacts with MGRN1, but does not undergo MGRN1-mediated ubiquitination; this interaction competes with GNAS-binding and thus inhibits agonist-induced cAMP production. Interacts with OPN3; the interaction results in a decrease in MC1R-mediated cAMP signaling and ultimately a decrease in melanin production in melanocytes.

The protein resides in the cell membrane. In terms of biological role, receptor for MSH (alpha, beta and gamma) and ACTH. The activity of this receptor is mediated by G proteins which activate adenylate cyclase. Mediates melanogenesis, the production of eumelanin (black/brown) and phaeomelanin (red/yellow), via regulation of cAMP signaling in melanocytes. This Equus caballus (Horse) protein is Melanocyte-stimulating hormone receptor (MC1R).